The following is a 409-amino-acid chain: Formyl-CoA:oxalate CoA-transferase (409 aa).

CoA-binding positions include 17–18 (QS), 71–74 (LNTK), 95–97 (NFG), Arg103, and 135–138 (KAYE). Asp167 acts as the Nucleophile in catalysis. Residues 221 to 245 (LAEYPNDDFGDEVPRSGNASGGGQP) are disordered. 242-244 (GGQ) is a binding site for substrate.

This sequence belongs to the CoA-transferase III family. Frc subfamily. Homodimer.

The enzyme catalyses formyl-CoA + oxalate = oxalyl-CoA + formate. It participates in metabolic intermediate degradation; oxalate degradation; CO(2) and formate from oxalate: step 1/2. In terms of biological role, involved in the catabolism of oxalate and in the adapatation to low pH via the induction of the oxalate-dependent acid tolerance response (ATR). Catalyzes the transfer of the CoA moiety from formyl-CoA to oxalate. In Streptomyces avermitilis (strain ATCC 31267 / DSM 46492 / JCM 5070 / NBRC 14893 / NCIMB 12804 / NRRL 8165 / MA-4680), this protein is Formyl-CoA:oxalate CoA-transferase.